The primary structure comprises 1086 residues: Calcium-transporting ATPase 9, plasma membrane-type (1086 aa).

Low complexity predominate over residues 1-15 (MSTSSSNGLLLTSMS). The interval 1–50 (MSTSSSNGLLLTSMSGRHDDMEAGSAKTEEHSDHEELQHDPDDPFDIDNT) is disordered. Residues 1 to 194 (MSTSSSNGLL…NTYPKKKGKN (194 aa)) are Cytoplasmic-facing. The segment covering 16–42 (GRHDDMEAGSAKTEEHSDHEELQHDPD) has biased composition (basic and acidic residues). Residues 57–68 (SLRRWRQAALVL) are interaction with calmodulin. A helical membrane pass occupies residues 195–215 (FFMFLWEAWQDLTLIILIIAA). The Lumenal portion of the chain corresponds to 216-233 (VTSLALGIKTEGLKEGWL). A helical membrane pass occupies residues 234–254 (DGGSIAFAVLLVIVVTAVSDY). The Cytoplasmic segment spans residues 255-382 (RQSLQFQNLN…GEETPLQVRL (128 aa)). Residues 383-402 (NGLATFIGIVGLSVALVVLV) form a helical membrane-spanning segment. At 403–439 (ALLVRYFTGTTQDTNGATQFIKGTTSISDIVDDCVKI) the chain is on the lumenal side. A helical membrane pass occupies residues 440 to 457 (FTIAVTIVVVAVPEGLPL). Topologically, residues 458–857 (AVTLTLAYSM…RWGRSVYANI (400 aa)) are cytoplasmic. The active-site 4-aspartylphosphate intermediate is the Asp495. The Mg(2+) site is built by Asp802 and Asp806. Residues 858-876 (QKFIQFQLTVNVAALIINV) traverse the membrane as a helical segment. The Lumenal segment spans residues 877–887 (VAAMSSGDVPL). A helical membrane pass occupies residues 888–908 (KAVQLLWVNLIMDTLGALALA). Topologically, residues 909–928 (TEPPTDHLMHRTPVGRREPL) are cytoplasmic. The helical transmembrane segment at 929–951 (ITNIMWRNLLVQSFYQVAVLLVL) threads the bilayer. At 952–963 (NFAGLSILGLNH) the chain is on the lumenal side. A helical transmembrane segment spans residues 964–988 (ENHAHAVEVKNTMIFNAFVMCQIFN). Residues 989–1006 (EFNARKPDEMNVFRGVNK) are Cytoplasmic-facing. Residues 1007-1028 (NPLFVAIVGVTFILQIIIVTFL) traverse the membrane as a helical segment. Residues 1029 to 1038 (GKFAHTVRLG) are Lumenal-facing. A helical transmembrane segment spans residues 1039–1060 (WQLWLASIIIGLVSWPLAIVGK). Residues 1061-1086 (LIPVPKTPMSVYFKKPFRKYKASRNA) lie on the Cytoplasmic side of the membrane.

Belongs to the cation transport ATPase (P-type) (TC 3.A.3) family. Type IIB subfamily.

The protein localises to the membrane. The enzyme catalyses Ca(2+)(in) + ATP + H2O = Ca(2+)(out) + ADP + phosphate + H(+). Its activity is regulated as follows. Activated by calmodulin. Its function is as follows. This magnesium-dependent enzyme catalyzes the hydrolysis of ATP coupled with the translocation of calcium from the cytosol out of the cell or into organelles. In Arabidopsis thaliana (Mouse-ear cress), this protein is Calcium-transporting ATPase 9, plasma membrane-type (ACA9).